A 266-amino-acid polypeptide reads, in one-letter code: Eukaryotic translation initiation factor 3 subunit J (266 aa).

Disordered stretches follow at residues 1 to 142 and 215 to 243; these read MAPS…VSDS and MSNE…VSLV. Over residues 26–44 the composition is skewed to acidic residues; that stretch reads DEEEEDVLDSWDAAEDSEV. Residues 40–99 are a coiled coil; that stretch reads EDSEVEREKAAKAAEAKAKAEAEAAAKKKSKAQRIQEHKEERKKREEEDSSSESEEDEAE. 2 stretches are compositionally biased toward basic and acidic residues: residues 45 to 65 and 73 to 86; these read EREK…EAAA and RIQE…KREE. Acidic residues predominate over residues 87-97; that stretch reads EDSSSESEEDE. 2 stretches are compositionally biased toward basic and acidic residues: residues 98–118 and 218–230; these read AERR…HAED and EKMR…DKGN.

The protein belongs to the eIF-3 subunit J family. In terms of assembly, component of the eukaryotic translation initiation factor 3 (eIF-3) complex.

It localises to the cytoplasm. Its function is as follows. Component of the eukaryotic translation initiation factor 3 (eIF-3) complex, which is involved in protein synthesis of a specialized repertoire of mRNAs and, together with other initiation factors, stimulates binding of mRNA and methionyl-tRNAi to the 40S ribosome. The eIF-3 complex specifically targets and initiates translation of a subset of mRNAs involved in cell proliferation. The protein is Eukaryotic translation initiation factor 3 subunit J (hcr1) of Aspergillus terreus (strain NIH 2624 / FGSC A1156).